A 491-amino-acid chain; its full sequence is MILDPLSPNIENHTQDEIIEFWEKTESIANIPKENLDESHVNSSLVAYLKFATDSYKVFINTDRDLYRMSLILLESSLFEFKKEFCLSKLQSLLNIDLLEMNMKFIIVYILLCEAKKNVYSLEIMLKFQGFTVFYNTLYTQFAYLSKYGKERTVASKHQYNSNNSSTGTSLDSLDRSLTDIDLGIIDEMKQISTVLMDLLFQIMKYCKCVIANLQIVDDFFVYYMMESMRSDTMDDMFNNAEFKLLLALNEQYMMFAKEYDIENKVYKYLINGSVSRCFTELLLLKFNRASDPPLQIMMCKIIYLILTPRGDYSPMNFFYTNDLRVLIDVLIRELQNISEDEEVLRNTLLRVLIPLLKNTQLSKTHYRKDDLNKLLNYLSTLDNICVDSPALHEHQVTVALSRKCLQQIPWLETPSTPSDGGSSVSSNNTSRNSSIVALGTPDNQNILARKGHLYSNRELDVSAESLTKRKAKAPPPPPPPPPSRKCGTPK.

Position 7 is a phosphoserine (Ser7). The tract at residues 413–491 (ETPSTPSDGG…PPSRKCGTPK (79 aa)) is disordered. Positions 414–435 (TPSTPSDGGSSVSSNNTSRNSS) are enriched in low complexity. Residues Ser463 and Ser466 each carry the phosphoserine modification. Residues 474–484 (APPPPPPPPPS) show a composition bias toward pro residues.

This sequence belongs to the LDB17 family.

It is found in the cytoplasm. Its subcellular location is the bud. It localises to the bud neck. May be involved in protein-linked oligosaccharide phosphorylation since the deletion reduces the negative charge of the cell surface. This chain is Protein LDB17 (LDB17), found in Saccharomyces cerevisiae (strain ATCC 204508 / S288c) (Baker's yeast).